Consider the following 338-residue polypeptide: S-adenosylmethionine:tRNA ribosyltransferase-isomerase (338 aa).

It belongs to the QueA family. In terms of assembly, monomer.

Its subcellular location is the cytoplasm. The enzyme catalyses 7-aminomethyl-7-carbaguanosine(34) in tRNA + S-adenosyl-L-methionine = epoxyqueuosine(34) in tRNA + adenine + L-methionine + 2 H(+). It functions in the pathway tRNA modification; tRNA-queuosine biosynthesis. Its function is as follows. Transfers and isomerizes the ribose moiety from AdoMet to the 7-aminomethyl group of 7-deazaguanine (preQ1-tRNA) to give epoxyqueuosine (oQ-tRNA). In Francisella tularensis subsp. novicida (strain U112), this protein is S-adenosylmethionine:tRNA ribosyltransferase-isomerase.